The chain runs to 175 residues: tRNA (cytidine(56)-2'-O)-methyltransferase (175 aa).

L82 lines the S-adenosyl-L-methionine pocket.

This sequence belongs to the aTrm56 family. Homodimer.

The protein localises to the cytoplasm. It catalyses the reaction cytidine(56) in tRNA + S-adenosyl-L-methionine = 2'-O-methylcytidine(56) in tRNA + S-adenosyl-L-homocysteine + H(+). Its function is as follows. Specifically catalyzes the AdoMet-dependent 2'-O-ribose methylation of cytidine at position 56 in tRNAs. This is tRNA (cytidine(56)-2'-O)-methyltransferase from Cenarchaeum symbiosum (strain A).